A 307-amino-acid chain; its full sequence is 4-hydroxythreonine-4-phosphate dehydrogenase (307 aa).

Substrate is bound by residues H121 and T122. Positions 150, 189, and 246 each coordinate a divalent metal cation. Residues K254, N263, and R272 each coordinate substrate.

This sequence belongs to the PdxA family. In terms of assembly, homodimer. It depends on Zn(2+) as a cofactor. Mg(2+) serves as cofactor. Requires Co(2+) as cofactor.

Its subcellular location is the cytoplasm. It catalyses the reaction 4-(phosphooxy)-L-threonine + NAD(+) = 3-amino-2-oxopropyl phosphate + CO2 + NADH. The protein operates within cofactor biosynthesis; pyridoxine 5'-phosphate biosynthesis; pyridoxine 5'-phosphate from D-erythrose 4-phosphate: step 4/5. Its function is as follows. Catalyzes the NAD(P)-dependent oxidation of 4-(phosphooxy)-L-threonine (HTP) into 2-amino-3-oxo-4-(phosphooxy)butyric acid which spontaneously decarboxylates to form 3-amino-2-oxopropyl phosphate (AHAP). The polypeptide is 4-hydroxythreonine-4-phosphate dehydrogenase (Campylobacter fetus subsp. fetus (strain 82-40)).